The chain runs to 492 residues: Protein PAIR1 (492 aa).

A coiled-coil region spans residues 166–186; the sequence is VDSVQSDVMQLNRAMKEASLD. The short motif at 479-483 is the Nuclear localization signal element; that stretch reads KRRRR.

As to quaternary structure, interacts with CRC1. Expressed in reproductive organs, but not in vegetative organs.

The protein localises to the nucleus. Its function is as follows. Involved in spore formation. Plays an essential role in the establishment of homologous chromosome pairing in early meiosis. In Oryza sativa subsp. japonica (Rice), this protein is Protein PAIR1 (PAIR1).